A 158-amino-acid chain; its full sequence is S-ribosylhomocysteine lyase (158 aa).

Residues H54, H58, and C124 each coordinate Fe cation.

This sequence belongs to the LuxS family. As to quaternary structure, homodimer. Requires Fe cation as cofactor.

It catalyses the reaction S-(5-deoxy-D-ribos-5-yl)-L-homocysteine = (S)-4,5-dihydroxypentane-2,3-dione + L-homocysteine. In terms of biological role, involved in the synthesis of autoinducer 2 (AI-2) which is secreted by bacteria and is used to communicate both the cell density and the metabolic potential of the environment. The regulation of gene expression in response to changes in cell density is called quorum sensing. Catalyzes the transformation of S-ribosylhomocysteine (RHC) to homocysteine (HC) and 4,5-dihydroxy-2,3-pentadione (DPD). This chain is S-ribosylhomocysteine lyase, found in Lactiplantibacillus plantarum (strain ATCC BAA-793 / NCIMB 8826 / WCFS1) (Lactobacillus plantarum).